An 88-amino-acid chain; its full sequence is Small ribosomal subunit protein uS15 (88 aa).

This sequence belongs to the universal ribosomal protein uS15 family. Part of the 30S ribosomal subunit. Forms a bridge to the 50S subunit in the 70S ribosome, contacting the 23S rRNA.

In terms of biological role, one of the primary rRNA binding proteins, it binds directly to 16S rRNA where it helps nucleate assembly of the platform of the 30S subunit by binding and bridging several RNA helices of the 16S rRNA. Forms an intersubunit bridge (bridge B4) with the 23S rRNA of the 50S subunit in the ribosome. This is Small ribosomal subunit protein uS15 from Acidovorax sp. (strain JS42).